A 246-amino-acid polypeptide reads, in one-letter code: tRNA pseudouridine synthase A (246 aa).

Catalysis depends on Asp-53, which acts as the Nucleophile. Tyr-112 contacts substrate.

It belongs to the tRNA pseudouridine synthase TruA family. As to quaternary structure, homodimer.

It carries out the reaction uridine(38/39/40) in tRNA = pseudouridine(38/39/40) in tRNA. In terms of biological role, formation of pseudouridine at positions 38, 39 and 40 in the anticodon stem and loop of transfer RNAs. This Anaplasma phagocytophilum (strain HZ) protein is tRNA pseudouridine synthase A.